The chain runs to 158 residues: Putative peptidoglycan-binding-like protein (158 aa).

The first 24 residues, 1–24 (MRSPKVKFLTIFTFCIFITKMSFA), serve as a signal peptide directing secretion.

This sequence belongs to the IagB/IpgF/P19 family.

It is found in the periplasm. This is Putative peptidoglycan-binding-like protein (pbl) from Escherichia coli (strain K12).